Reading from the N-terminus, the 212-residue chain is Phosphoenolpyruvate guanylyltransferase (212 aa).

Residues T139, G155, and S158 each coordinate phosphoenolpyruvate.

Belongs to the CofC family.

It carries out the reaction phosphoenolpyruvate + GTP + H(+) = enolpyruvoyl-2-diphospho-5'-guanosine + diphosphate. It functions in the pathway cofactor biosynthesis; coenzyme F420 biosynthesis. Functionally, guanylyltransferase that catalyzes the activation of phosphoenolpyruvate (PEP) as enolpyruvoyl-2-diphospho-5'-guanosine, via the condensation of PEP with GTP. It is involved in the biosynthesis of coenzyme F420, a hydride carrier cofactor. In Streptomyces coelicolor (strain ATCC BAA-471 / A3(2) / M145), this protein is Phosphoenolpyruvate guanylyltransferase.